The chain runs to 254 residues: Ubiquinone/menaquinone biosynthesis C-methyltransferase UbiE (254 aa).

Residues Thr77, Asp98, 126 to 127 (DA), and Ser143 each bind S-adenosyl-L-methionine.

It belongs to the class I-like SAM-binding methyltransferase superfamily. MenG/UbiE family.

The catalysed reaction is a 2-demethylmenaquinol + S-adenosyl-L-methionine = a menaquinol + S-adenosyl-L-homocysteine + H(+). It catalyses the reaction a 2-methoxy-6-(all-trans-polyprenyl)benzene-1,4-diol + S-adenosyl-L-methionine = a 5-methoxy-2-methyl-3-(all-trans-polyprenyl)benzene-1,4-diol + S-adenosyl-L-homocysteine + H(+). Its pathway is quinol/quinone metabolism; menaquinone biosynthesis; menaquinol from 1,4-dihydroxy-2-naphthoate: step 2/2. It functions in the pathway cofactor biosynthesis; ubiquinone biosynthesis. Functionally, methyltransferase required for the conversion of demethylmenaquinol (DMKH2) to menaquinol (MKH2) and the conversion of 2-polyprenyl-6-methoxy-1,4-benzoquinol (DDMQH2) to 2-polyprenyl-3-methyl-6-methoxy-1,4-benzoquinol (DMQH2). In Blochmanniella pennsylvanica (strain BPEN), this protein is Ubiquinone/menaquinone biosynthesis C-methyltransferase UbiE.